The chain runs to 529 residues: uncharacterized protein (529 aa).

A helical transmembrane segment spans residues 354–373; that stretch reads FHVASFPWISWAILGSYIML.

The protein resides in the host membrane. This is an uncharacterized protein from Acidianus convivator (ATV).